Reading from the N-terminus, the 126-residue chain is Small ribosomal subunit protein uS8 (126 aa).

Belongs to the universal ribosomal protein uS8 family. As to quaternary structure, part of the 30S ribosomal subunit. Contacts proteins S5 and S12.

Its function is as follows. One of the primary rRNA binding proteins, it binds directly to 16S rRNA central domain where it helps coordinate assembly of the platform of the 30S subunit. The polypeptide is Small ribosomal subunit protein uS8 (Lawsonia intracellularis (strain PHE/MN1-00)).